We begin with the raw amino-acid sequence, 387 residues long: 3-ketoacyl-CoA thiolase (387 aa).

Cys91 serves as the catalytic Acyl-thioester intermediate. Residues His343 and Cys373 each act as proton acceptor in the active site.

It belongs to the thiolase-like superfamily. Thiolase family. As to quaternary structure, heterotetramer of two alpha chains (FadB) and two beta chains (FadA).

Its subcellular location is the cytoplasm. It carries out the reaction an acyl-CoA + acetyl-CoA = a 3-oxoacyl-CoA + CoA. It functions in the pathway lipid metabolism; fatty acid beta-oxidation. Functionally, catalyzes the final step of fatty acid oxidation in which acetyl-CoA is released and the CoA ester of a fatty acid two carbons shorter is formed. This is 3-ketoacyl-CoA thiolase from Aliivibrio salmonicida (strain LFI1238) (Vibrio salmonicida (strain LFI1238)).